The sequence spans 472 residues: E3 ubiquitin-protein ligase MYLIP-A (472 aa).

The region spanning 1–279 (MLCHVTRPDA…ETHAFYRCDT (279 aa)) is the FERM domain. An RING-type zinc finger spans residues 384–419 (CMLCCEEEIDAAFCPCGHMVCCQNCAAQLQSCPVCR).

Interacts with anxa5. Ubiquitous.

The protein localises to the cytoplasm. The protein resides in the cytosol. The catalysed reaction is S-ubiquitinyl-[E2 ubiquitin-conjugating enzyme]-L-cysteine + [acceptor protein]-L-lysine = [E2 ubiquitin-conjugating enzyme]-L-cysteine + N(6)-ubiquitinyl-[acceptor protein]-L-lysine.. The protein operates within protein modification; protein ubiquitination. Its function is as follows. E3 ubiquitin-protein ligase that mediates ubiquitination and subsequent proteasomal degradation of myosin regulatory light chain (MRLC). Regulates cell movements during gastrulation by acting downstream of fz7 to antagonize the frizzled-signaling pathway. The sequence is that of E3 ubiquitin-protein ligase MYLIP-A (mylipa) from Danio rerio (Zebrafish).